Reading from the N-terminus, the 404-residue chain is Sorting nexin-5 (404 aa).

Alanine 2 is modified (N-acetylalanine). The PX domain occupies leucine 25–leucine 172. A 1,2-diacyl-sn-glycero-3-phospho-(1D-myo-inositol-4,5-bisphosphate)-binding positions include serine 40–lysine 46, phenylalanine 99–lysine 105, and glutamate 113–methionine 116. The segment at aspartate 169 to valine 261 is interaction with DOCK1. Residues phenylalanine 183–serine 200 form a membrane-binding amphipathic helix region. Serine 193 carries the post-translational modification Phosphoserine. Positions valine 202–asparagine 404 constitute a BAR domain. Lysine 275 carries the post-translational modification N6-acetyllysine.

This sequence belongs to the sorting nexin family. As to quaternary structure, forms heterodimers with BAR domain-containing sorting nexins SNX1 and SNX2; does not homodimerize. The heterodimers are proposed to self-assemble into helical arrays on the membrane to stabilize and expand local membrane curvature underlying endosomal tubule formation. Thought to be a component of the originally described retromer complex (also called SNX-BAR retromer) which is a pentamer containing the heterotrimeric retromer cargo-selective complex (CSC), also described as vacuolar protein sorting subcomplex (VPS), and a heterodimeric membrane-deforming subcomplex formed between SNX1 or SNX2 and SNX5 or SNX6 (also called SNX-BAR subcomplex); the respective CSC and SNX-BAR subcomplexes associate with low affinity. Interacts with SNX1, SNX2, VPS26A, VPS29, VPS35, DCTN1, DOCK1, MIB1, PIP5K1C. Interacts with HGS; increased by PIP5K1C kinase activity and by PtdIns(3P) and/or PtdIns(3,4)P2. Detected in macrophages (at protein level).

The protein localises to the endosome. It localises to the early endosome. It is found in the early endosome membrane. Its subcellular location is the cell membrane. The protein resides in the cytoplasmic vesicle membrane. The protein localises to the cytoplasm. It localises to the cell projection. It is found in the phagocytic cup. Its subcellular location is the ruffle. Functionally, involved in several stages of intracellular trafficking. Interacts with membranes containing phosphatidylinositol lipids. Acts in part as component of the retromer membrane-deforming SNX-BAR subcomplex. The SNX-BAR retromer mediates retrograde transport of cargo proteins from endosomes to the trans-Golgi network (TGN) and is involved in endosome-to-plasma membrane transport for cargo protein recycling. The SNX-BAR subcomplex functions to deform the donor membrane into a tubular profile called endosome-to-TGN transport carrier (ETC). Does not have in vitro vesicle-to-membrane remodeling activity. Involved in retrograde transport of lysosomal enzyme receptor IGF2R. May function as link between endosomal transport vesicles and dynactin. Plays a role in the internalization of EGFR after EGF stimulation. Involved in EGFR endosomal sorting and degradation; the function involves PIP5K1C and is retromer-independent. Together with PIP5K1C facilitates HGS interaction with ubiquitinated EGFR, which initiates EGFR sorting to intraluminal vesicles (ILVs) of the multivesicular body for subsequent lysosomal degradation. Involved in E-cadherin sorting and degradation; inhibits PIP5K1C-mediated E-cadherin degradation. Plays a role in macropinocytosis. The protein is Sorting nexin-5 (Snx5) of Mus musculus (Mouse).